The sequence spans 556 residues: Dihydroxy-acid dehydratase (556 aa).

Aspartate 78 is a Mg(2+) binding site. Cysteine 119 contributes to the [2Fe-2S] cluster binding site. Mg(2+) contacts are provided by aspartate 120 and lysine 121. Lysine 121 carries the N6-carboxylysine modification. Residue cysteine 195 participates in [2Fe-2S] cluster binding. Glutamate 446 contacts Mg(2+). Serine 472 functions as the Proton acceptor in the catalytic mechanism.

Belongs to the IlvD/Edd family. As to quaternary structure, homodimer. It depends on [2Fe-2S] cluster as a cofactor. Mg(2+) serves as cofactor.

The enzyme catalyses (2R)-2,3-dihydroxy-3-methylbutanoate = 3-methyl-2-oxobutanoate + H2O. It carries out the reaction (2R,3R)-2,3-dihydroxy-3-methylpentanoate = (S)-3-methyl-2-oxopentanoate + H2O. It participates in amino-acid biosynthesis; L-isoleucine biosynthesis; L-isoleucine from 2-oxobutanoate: step 3/4. The protein operates within amino-acid biosynthesis; L-valine biosynthesis; L-valine from pyruvate: step 3/4. Functions in the biosynthesis of branched-chain amino acids. Catalyzes the dehydration of (2R,3R)-2,3-dihydroxy-3-methylpentanoate (2,3-dihydroxy-3-methylvalerate) into 2-oxo-3-methylpentanoate (2-oxo-3-methylvalerate) and of (2R)-2,3-dihydroxy-3-methylbutanoate (2,3-dihydroxyisovalerate) into 2-oxo-3-methylbutanoate (2-oxoisovalerate), the penultimate precursor to L-isoleucine and L-valine, respectively. This Desulfatibacillum aliphaticivorans protein is Dihydroxy-acid dehydratase.